The primary structure comprises 309 residues: Malate dehydrogenase (309 aa).

NAD(+)-binding positions include 8-13 and Asp-33; that span reads GAGLVG. Arg-82 and Arg-88 together coordinate substrate. NAD(+) is bound by residues Asn-95 and 118–120; that span reads VSN. Substrate is bound by residues Asn-120 and Arg-151. His-175 functions as the Proton acceptor in the catalytic mechanism.

Belongs to the LDH/MDH superfamily. MDH type 3 family.

It catalyses the reaction (S)-malate + NAD(+) = oxaloacetate + NADH + H(+). Functionally, catalyzes the reversible oxidation of malate to oxaloacetate. The polypeptide is Malate dehydrogenase (Pseudomonas putida (strain GB-1)).